Here is a 272-residue protein sequence, read N- to C-terminus: Insulin-like growth factor-binding protein 1 (272 aa).

An N-terminal signal peptide occupies residues 1–25 (MPEFLTVVSWPFLILLSFQVRVVAG). In terms of domain architecture, IGFBP N-terminal spans 28–109 (QPWHCAPCTA…TRGQGACVLE (82 aa)). Cystine bridges form between cysteine 32–cysteine 59, cysteine 35–cysteine 61, cysteine 43–cysteine 62, cysteine 50–cysteine 65, cysteine 73–cysteine 86, and cysteine 80–cysteine 106. The disordered stretch occupies residues 115 to 143 (TSSLSGSQHEEAKAAVASEDELAESPEMT). Over residues 132-143 (SEDELAESPEMT) the composition is skewed to acidic residues. A phosphoserine mark is found at serine 139, serine 157, and serine 169. Threonine 170 is modified (phosphothreonine). Phosphotyrosine is present on tyrosine 171. A Thyroglobulin type-1 domain is found at 186-264 (KEPCQRELYK…SLETRGDPNC (79 aa)). 3 cysteine pairs are disulfide-bonded: cysteine 189-cysteine 219, cysteine 230-cysteine 241, and cysteine 243-cysteine 264. A Phosphoserine modification is found at serine 255. Residues 259 to 261 (RGD) carry the Cell attachment site motif.

In terms of assembly, binds equally well IGF1 and IGF2. Interacts with integrin ITGA5:ITGB1. Interacts with VHL; this interaction inhibits HIF1A degradation.

It localises to the secreted. Its function is as follows. Multifunctional protein that plays a critical role in regulating the availability of IGFs such as IGF1 and IGF2 to their receptors and thereby regulates IGF-mediated cellular processes including cell migration, proliferation, differentiation or apoptosis in a cell-type specific manner. Also plays a positive role in cell migration by interacting with integrin ITGA5:ITGB1 through its RGD motif. Mechanistically, binding to integrins leads to activation of focal adhesion kinase/PTK2 and stimulation of the mitogen-activated protein kinase (MAPK) pathway. Regulates cardiomyocyte apoptosis by suppressing HIF-1alpha/HIF1A ubiquitination and subsequent degradation. This Rattus norvegicus (Rat) protein is Insulin-like growth factor-binding protein 1 (Igfbp1).